Here is a 97-residue protein sequence, read N- to C-terminus: MKRICSIYKSPRKNEMYLYVLKADALTRVPEGLLGIFGPPAHAFDLVLSPERQLAREDIATVLENLDKQGYHLQMPPPEEDYIQHLPDELLCRNDPV.

The region spanning 3 to 87 (RICSIYKSPR…PEEDYIQHLP (85 aa)) is the YcgL domain.

This is YcgL domain-containing protein Pmen_1774 from Ectopseudomonas mendocina (strain ymp) (Pseudomonas mendocina).